The sequence spans 115 residues: UPF0125 protein VP0646 (115 aa).

Residues 92–115 (RAEQAKAAGNADPVTGGKPNALRK) form a disordered region.

It belongs to the UPF0125 (RnfH) family.

The polypeptide is UPF0125 protein VP0646 (Vibrio parahaemolyticus serotype O3:K6 (strain RIMD 2210633)).